The following is a 705-amino-acid chain: Elongation factor G 2 (705 aa).

The tr-type G domain maps to 8-288; sequence ERYRNIGISA…AVIDYLPSPA (281 aa). GTP is bound by residues 17 to 24, 86 to 90, and 140 to 143; these read AHIDAGKT, DTPGH, and NKMD.

This sequence belongs to the TRAFAC class translation factor GTPase superfamily. Classic translation factor GTPase family. EF-G/EF-2 subfamily.

It localises to the cytoplasm. Functionally, catalyzes the GTP-dependent ribosomal translocation step during translation elongation. During this step, the ribosome changes from the pre-translocational (PRE) to the post-translocational (POST) state as the newly formed A-site-bound peptidyl-tRNA and P-site-bound deacylated tRNA move to the P and E sites, respectively. Catalyzes the coordinated movement of the two tRNA molecules, the mRNA and conformational changes in the ribosome. This chain is Elongation factor G 2, found in Bordetella parapertussis (strain 12822 / ATCC BAA-587 / NCTC 13253).